The chain runs to 346 residues: Phosphoribosylformylglycinamidine cyclo-ligase (346 aa).

The protein belongs to the AIR synthase family.

It is found in the cytoplasm. It carries out the reaction 2-formamido-N(1)-(5-O-phospho-beta-D-ribosyl)acetamidine + ATP = 5-amino-1-(5-phospho-beta-D-ribosyl)imidazole + ADP + phosphate + H(+). The protein operates within purine metabolism; IMP biosynthesis via de novo pathway; 5-amino-1-(5-phospho-D-ribosyl)imidazole from N(2)-formyl-N(1)-(5-phospho-D-ribosyl)glycinamide: step 2/2. This is Phosphoribosylformylglycinamidine cyclo-ligase from Bacillus thuringiensis subsp. konkukian (strain 97-27).